Reading from the N-terminus, the 333-residue chain is NADH-quinone oxidoreductase subunit H (333 aa).

8 helical membrane-spanning segments follow: residues 15-35 (IALF…FVTY), 88-108 (YVLA…VLPF), 117-137 (IGVG…GVVA), 165-185 (LVMS…VDIV), 191-211 (VWFI…AVAE), 241-261 (FFML…TILF), 274-294 (IPGA…LIWF), and 313-333 (VLLP…AWFF).

The protein belongs to the complex I subunit 1 family. In terms of assembly, NDH-1 is composed of 14 different subunits. Subunits NuoA, H, J, K, L, M, N constitute the membrane sector of the complex.

The protein localises to the cell membrane. It catalyses the reaction a quinone + NADH + 5 H(+)(in) = a quinol + NAD(+) + 4 H(+)(out). In terms of biological role, NDH-1 shuttles electrons from NADH, via FMN and iron-sulfur (Fe-S) centers, to quinones in the respiratory chain. The immediate electron acceptor for the enzyme in this species is believed to be ubiquinone. Couples the redox reaction to proton translocation (for every two electrons transferred, four hydrogen ions are translocated across the cytoplasmic membrane), and thus conserves the redox energy in a proton gradient. This subunit may bind ubiquinone. The sequence is that of NADH-quinone oxidoreductase subunit H from Geobacillus kaustophilus (strain HTA426).